The sequence spans 434 residues: UDP-N-acetylglucosamine 1-carboxyvinyltransferase (434 aa).

34 to 35 (KN) is a phosphoenolpyruvate binding site. Arg104 lines the UDP-N-acetyl-alpha-D-glucosamine pocket. The Proton donor role is filled by Cys128. 2-(S-cysteinyl)pyruvic acid O-phosphothioketal is present on Cys128. UDP-N-acetyl-alpha-D-glucosamine-binding residues include Asp319 and Ile341.

Belongs to the EPSP synthase family. MurA subfamily.

The protein resides in the cytoplasm. The enzyme catalyses phosphoenolpyruvate + UDP-N-acetyl-alpha-D-glucosamine = UDP-N-acetyl-3-O-(1-carboxyvinyl)-alpha-D-glucosamine + phosphate. Its pathway is cell wall biogenesis; peptidoglycan biosynthesis. Functionally, cell wall formation. Adds enolpyruvyl to UDP-N-acetylglucosamine. The chain is UDP-N-acetylglucosamine 1-carboxyvinyltransferase from Prochlorococcus marinus (strain MIT 9313).